The following is a 184-amino-acid chain: Elongation factor P (184 aa).

The protein belongs to the elongation factor P family.

It localises to the cytoplasm. It participates in protein biosynthesis; polypeptide chain elongation. In terms of biological role, involved in peptide bond synthesis. Stimulates efficient translation and peptide-bond synthesis on native or reconstituted 70S ribosomes in vitro. Probably functions indirectly by altering the affinity of the ribosome for aminoacyl-tRNA, thus increasing their reactivity as acceptors for peptidyl transferase. The polypeptide is Elongation factor P (Verminephrobacter eiseniae (strain EF01-2)).